Consider the following 379-residue polypeptide: Putative beta-glucosidase 6 (379 aa).

The signal sequence occupies residues 1–20 (MEKTFALITIFLAFAFSGKC). A beta-D-glucoside is bound by residues Q43, H141, and 186–187 (NE). Residue E187 is the Proton donor of the active site. C206 and C213 form a disulfide bridge. N-linked (GlcNAc...) asparagine glycosylation is present at N217. An a beta-D-glucoside-binding site is contributed by Y329. A glycan (N-linked (GlcNAc...) asparagine) is linked at N362.

This sequence belongs to the glycosyl hydrolase 1 family.

It catalyses the reaction Hydrolysis of terminal, non-reducing beta-D-glucosyl residues with release of beta-D-glucose.. The sequence is that of Putative beta-glucosidase 6 from Arabidopsis thaliana (Mouse-ear cress).